Reading from the N-terminus, the 118-residue chain is Heavy metal-associated isoprenylated plant protein 47 (118 aa).

The HMA domain occupies 1-67 (MRIKLSVNSE…KACHVTLETL (67 aa)). Cysteine methyl ester is present on cysteine 115. Cysteine 115 carries the S-farnesyl cysteine lipid modification. Positions 116–118 (LVM) are cleaved as a propeptide — removed in mature form.

This sequence belongs to the HIPP family.

Heavy-metal-binding protein. The chain is Heavy metal-associated isoprenylated plant protein 47 from Arabidopsis thaliana (Mouse-ear cress).